A 206-amino-acid chain; its full sequence is Imidazoleglycerol-phosphate dehydratase (206 aa).

It belongs to the imidazoleglycerol-phosphate dehydratase family.

The protein resides in the cytoplasm. It catalyses the reaction D-erythro-1-(imidazol-4-yl)glycerol 3-phosphate = 3-(imidazol-4-yl)-2-oxopropyl phosphate + H2O. The protein operates within amino-acid biosynthesis; L-histidine biosynthesis; L-histidine from 5-phospho-alpha-D-ribose 1-diphosphate: step 6/9. This Synechococcus sp. (strain JA-3-3Ab) (Cyanobacteria bacterium Yellowstone A-Prime) protein is Imidazoleglycerol-phosphate dehydratase.